Here is a 585-residue protein sequence, read N- to C-terminus: MQRFGTGSSRSWCGRAGTATIAAVLLASGALTGLPPAYAISPPTIDPGALPPDGPPGPLAPMKQNAYCTEVGVLPGTDFQLQPKYMEMLNLNEAWQFGRGDGVKVAVIDTGVTPHPRLPRLIPGGDYVMAGGDGLSDCDAHGTLVASMIAAVPANGAVPLPSVPRRPVTIPTTETPPPPQTVTLSPVPPQTVTVIPAPPPEEGVPPGAPVPGPEPPPAPGPQPPAVDRGGGTVTVPSYSGGRKIAPIDNPRNPHPSAPSPALGPPPDAFSGIAPGVEIISIRQSSQAFGLKDPYTGDEDPQTAQKIDNVETMARAIVHAANMGASVINISDVMCMSARNVIDQRALGAAVHYAAVDKDAVIVAAAGDGSKKDCKQNPIFDPLQPDDPRAWNAVTTVVTPSWFHDYVLTVGAVDANGQPLSKMSIAGPWVSISAPGTDVVGLSPRDDGLINAIDGPDNSLLVPAGTSFSAAIVSGVAALVRAKFPELSAYQIINRLIHTARPPARGVDNQVGYGVVDPVAALTWDVPKGPAEPPKQLSAPLVVPQPPAPRDMVPIWVAAGGLAGALLIGGAVFGTATLMRRSRKQQ.

A signal peptide spans 1-39 (MQRFGTGSSRSWCGRAGTATIAAVLLASGALTGLPPAYA). The 439-residue stretch at 83 to 521 (PKYMEMLNLN…YGVVDPVAAL (439 aa)) folds into the Peptidase S8 domain. Active-site charge relay system residues include Asp109 and His141. A compositionally biased stretch (low complexity) spans 163-173 (VPRRPVTIPTT). A disordered region spans residues 163 to 269 (VPRRPVTIPT…PALGPPPDAF (107 aa)). 2 stretches are compositionally biased toward pro residues: residues 196–224 (PAPP…PQPP) and 252–267 (NPHP…PPPD). Ser466 serves as the catalytic Charge relay system. A helical membrane pass occupies residues 552–572 (VPIWVAAGGLAGALLIGGAVF).

This sequence belongs to the peptidase S8 family.

It localises to the cell membrane. This Mycobacterium tuberculosis (strain ATCC 25618 / H37Rv) protein is Mycosin-5.